We begin with the raw amino-acid sequence, 658 residues long: Transmembrane 9 superfamily member 11 (658 aa).

A signal peptide spans 1 to 23 (MRSMDRFGIWVLAILLVIQSSFG). Over 24–291 (FYLPGSYPHK…LKMEGSKVHW (268 aa)) the chain is Lumenal. Residues 292-312 (FSILNSLMVITFLAGIVLVIF) traverse the membrane as a helical segment. Over 313 to 364 (LRTVRRDLTRYEELDKEAQAQMNEELSGWKLVVGDVFRAPSNASLLCVMVGD) the chain is Cytoplasmic. A helical membrane pass occupies residues 365–385 (GVQILGMAVVTILFAALGFMS). At 386–391 (PASRGT) the chain is on the lumenal side. A helical membrane pass occupies residues 392–412 (LITGMLFFYMILGIAAGYVSV). The Cytoplasmic segment spans residues 413–432 (RLWRTIGCGEHRGWMSVAWK). The helical transmembrane segment at 433 to 453 (AACFFPGIAFLILTTLNFLLW) threads the bilayer. The Lumenal portion of the chain corresponds to 454–462 (GSHSTGAIP). Residues 463 to 483 (FSLFVILLLLWFCISVPLTLI) traverse the membrane as a helical segment. Topologically, residues 484–515 (GGYFGAKAPHIEFPVRTNQIPREIPAQKYPSW) are cytoplasmic. The helical transmembrane segment at 516–536 (LLVLGAGTLPFGTLFIELFFI) threads the bilayer. At 537–547 (MSSIWMGRVYY) the chain is on the lumenal side. A helical transmembrane segment spans residues 548-568 (VFGFLFVVLILLVVVCAEVSL). At 569–586 (VLTYMHLCVEDYKWWWKS) the chain is on the cytoplasmic side. The chain crosses the membrane as a helical span at residues 587–607 (FFASGSVAIYIFIYSINYLVF). Over 608–619 (DLKSLSGPVSAT) the chain is Lumenal. A helical membrane pass occupies residues 620–640 (LYLGYSLFMVLAIMLATGTVG). The Cytoplasmic portion of the chain corresponds to 641–658 (FLSSFWFVHYLFSSVKLD). Residues 647-652 (FVHYLF) carry the Endoplasmic reticulum export signal motif. The short motif at 656–658 (KLD) is the Golgi retention signal element.

This sequence belongs to the nonaspanin (TM9SF) (TC 9.A.2) family.

It is found in the endosome membrane. The protein localises to the golgi apparatus membrane. This chain is Transmembrane 9 superfamily member 11, found in Arabidopsis thaliana (Mouse-ear cress).